The following is a 467-amino-acid chain: Plasma alpha-L-fucosidase (467 aa).

The N-terminal stretch at 1 to 28 (MRPQELPRLAFPLLLLLLLLLPPPPCPA) is a signal peptide. N-linked (GlcNAc...) asparagine glycosylation is found at asparagine 171 and asparagine 239. The residue at position 301 (serine 301) is a Phosphoserine; by FAM20C. N-linked (GlcNAc...) asparagine glycosylation is present at asparagine 377.

Belongs to the glycosyl hydrolase 29 family. In terms of assembly, homotetramer.

Its subcellular location is the secreted. The enzyme catalyses an alpha-L-fucoside + H2O = L-fucose + an alcohol. Its function is as follows. Alpha-L-fucosidase is responsible for hydrolyzing the alpha-1,6-linked fucose joined to the reducing-end N-acetylglucosamine of the carbohydrate moieties of glycoproteins. This chain is Plasma alpha-L-fucosidase (FUCA2), found in Homo sapiens (Human).